A 388-amino-acid polypeptide reads, in one-letter code: 1-deoxy-D-xylulose 5-phosphate reductoisomerase (388 aa).

The NADPH site is built by T15, G16, S17, I18, and N127. Residue K128 coordinates 1-deoxy-D-xylulose 5-phosphate. E129 serves as a coordination point for NADPH. D153 serves as a coordination point for Mn(2+). 1-deoxy-D-xylulose 5-phosphate is bound by residues S154, E155, S179, and H202. E155 contacts Mn(2+). G208 is an NADPH binding site. 1-deoxy-D-xylulose 5-phosphate contacts are provided by S215, N220, K221, and E224. E224 lines the Mn(2+) pocket.

The protein belongs to the DXR family. Mg(2+) serves as cofactor. Mn(2+) is required as a cofactor.

It carries out the reaction 2-C-methyl-D-erythritol 4-phosphate + NADP(+) = 1-deoxy-D-xylulose 5-phosphate + NADPH + H(+). Its pathway is isoprenoid biosynthesis; isopentenyl diphosphate biosynthesis via DXP pathway; isopentenyl diphosphate from 1-deoxy-D-xylulose 5-phosphate: step 1/6. In terms of biological role, catalyzes the NADPH-dependent rearrangement and reduction of 1-deoxy-D-xylulose-5-phosphate (DXP) to 2-C-methyl-D-erythritol 4-phosphate (MEP). The polypeptide is 1-deoxy-D-xylulose 5-phosphate reductoisomerase (Bacteroides fragilis (strain ATCC 25285 / DSM 2151 / CCUG 4856 / JCM 11019 / LMG 10263 / NCTC 9343 / Onslow / VPI 2553 / EN-2)).